The primary structure comprises 216 residues: Ras-related protein Rab11A (216 aa).

Residues 19 to 27 (GDSGVGKSN), 38 to 44 (CLESKST), 67 to 71 (DTAGQ), 125 to 128 (NKSD), and 155 to 157 (SAL) contribute to the GTP site. The Effector region motif lies at 41 to 49 (SKSTIGVEF). 2 S-geranylgeranyl cysteine lipidation sites follow: Cys-213 and Cys-214.

This sequence belongs to the small GTPase superfamily. Rab family.

It localises to the cell membrane. The sequence is that of Ras-related protein Rab11A (RAB11A) from Nicotiana tabacum (Common tobacco).